Reading from the N-terminus, the 266-residue chain is Non-structural maintenance of chromosomes element 1 homolog (266 aa).

An interaction with NSMCE3 region spans residues 1–102 (MQGSTRRAGA…SVSKMATDFA (102 aa)). An RING-type; atypical zinc finger spans residues 191–232 (CNICHSLLIQGQSCETCGIRMHLPCVAKYFQSTAEPRCPHCN). Residues 246 to 266 (EKEREAGISKSSRKSLRTRQH) are disordered. Basic residues predominate over residues 256–266 (SSRKSLRTRQH).

This sequence belongs to the NSE1 family. Component of the SMC5-SMC6 complex which consists at least of SMC5, SMC6, NSMCE2, NSMCE1, NSMCE4A or EID3 and NSMCE3. NSMCE1, NSMCE4A or EID3 and NSMCE3 probably form a subcomplex that bridges the head domains of the SMC5-SMC6 heterodimer. Interacts with NSMCE3. Post-translationally, ubiquitinated.

Its subcellular location is the nucleus. It is found in the chromosome. The protein localises to the telomere. It carries out the reaction S-ubiquitinyl-[E2 ubiquitin-conjugating enzyme]-L-cysteine + [acceptor protein]-L-lysine = [E2 ubiquitin-conjugating enzyme]-L-cysteine + N(6)-ubiquitinyl-[acceptor protein]-L-lysine.. RING-type zinc finger-containing E3 ubiquitin ligase that assembles with melanoma antigen protein (MAGE) to catalyze the direct transfer of ubiquitin from E2 ubiquitin-conjugating enzyme to a specific substrate. Within MAGE-RING ubiquitin ligase complex, MAGE stimulates and specifies ubiquitin ligase activity likely through recruitment and/or stabilization of the E2 ubiquitin-conjugating enzyme at the E3:substrate complex. Involved in maintenance of genome integrity, DNA damage response and DNA repair. NSMCE3/MAGEG1 and NSMCE1 ubiquitin ligase are components of SMC5-SMC6 complex and may positively regulate homologous recombination-mediated DNA repair. This is Non-structural maintenance of chromosomes element 1 homolog (Nsmce1) from Rattus norvegicus (Rat).